The chain runs to 262 residues: Thiazole synthase (262 aa).

The Schiff-base intermediate with DXP role is filled by K97. 1-deoxy-D-xylulose 5-phosphate is bound by residues G158, 185–186 (AG), and 207–208 (NT). Positions 243–262 (DKAQASTPTVGQPFWHSAEY) are disordered.

The protein belongs to the ThiG family. In terms of assembly, homotetramer. Forms heterodimers with either ThiH or ThiS.

The protein resides in the cytoplasm. It catalyses the reaction [ThiS sulfur-carrier protein]-C-terminal-Gly-aminoethanethioate + 2-iminoacetate + 1-deoxy-D-xylulose 5-phosphate = [ThiS sulfur-carrier protein]-C-terminal Gly-Gly + 2-[(2R,5Z)-2-carboxy-4-methylthiazol-5(2H)-ylidene]ethyl phosphate + 2 H2O + H(+). The protein operates within cofactor biosynthesis; thiamine diphosphate biosynthesis. Its function is as follows. Catalyzes the rearrangement of 1-deoxy-D-xylulose 5-phosphate (DXP) to produce the thiazole phosphate moiety of thiamine. Sulfur is provided by the thiocarboxylate moiety of the carrier protein ThiS. In vitro, sulfur can be provided by H(2)S. The protein is Thiazole synthase of Neisseria meningitidis serogroup C (strain 053442).